We begin with the raw amino-acid sequence, 97 residues long: Osteocalcin (97 aa).

The signal sequence occupies residues 1–20 (MKAAALLLLAALLTFSLCRS). The propeptide occupies 21–48 (APDGSDARSAKAFISHRQRAEMVRRQKR). One can recognise a Gla domain in the interval 49-95 (HYAQDSGVAGAPPNPLEAQREVCELSPDCDELADQIGFQEAYRRFYG). Ca(2+) contacts are provided by Glu-65, Glu-69, Glu-72, and Asp-78. 3 positions are modified to 4-carboxyglutamate: Glu-65, Glu-69, and Glu-72. Cysteines 71 and 77 form a disulfide.

Belongs to the osteocalcin/matrix Gla protein family. Gamma-carboxyglutamate residues are formed by vitamin K dependent carboxylation by GGCX. These residues are essential for the binding of calcium.

It is found in the secreted. The carboxylated form is one of the main organic components of the bone matrix, which constitutes 1-2% of the total bone protein. The carboxylated form binds strongly to apatite and calcium. This is Osteocalcin (BGLAP) from Gallus gallus (Chicken).